Here is a 112-residue protein sequence, read N- to C-terminus: uncharacterized protein (112 aa).

A run of 2 helical transmembrane segments spans residues 33-53 and 69-89; these read IIGI…MIIF and MNNI…HITV.

Its subcellular location is the membrane. This is an uncharacterized protein from Saccharomyces cerevisiae (strain ATCC 204508 / S288c) (Baker's yeast).